Consider the following 166-residue polypeptide: Interleukin-3 (166 aa).

An N-terminal signal peptide occupies residues 1-27; the sequence is MVLASSTTSILCMLLPLLMLFHQGLQI. Intrachain disulfides connect Cys-43–Cys-106 and Cys-105–Cys-166. Residues Asn-60 and Asn-70 are each glycosylated (N-linked (GlcNAc...) asparagine). Residues 145–166 form a disordered region; sequence SVSRPPQPTSSSDNFRPMTVEC.

It belongs to the IL-3 family. As to quaternary structure, monomer. In terms of tissue distribution, activated T-cells, mast cells, natural killer cells.

It localises to the secreted. In terms of biological role, cytokine secreted predominantly by activated T-lymphocytes as well as mast cells and osteoblastic cells that controls the production and differentiation of hematopoietic progenitor cells into lineage-restricted cells. Also stimulates mature basophils, eosinophils, and monocytes to become functionally activated. In addition, plays an important role in neural cell proliferation and survival. Participates as well in bone homeostasis and inhibits osteoclast differentiation by preventing NF-kappa-B nuclear translocation and activation. Mechanistically, exerts its biological effects through a receptor composed of IL3RA subunit and a signal transducing subunit IL3RB. Receptor stimulation results in the rapid activation of JAK2 kinase activity leading to STAT5-mediated transcriptional program. Alternatively, contributes to cell survival under oxidative stress in non-hematopoietic systems by activating pathways mediated by PI3K/AKT and ERK. This chain is Interleukin-3 (Il3), found in Rattus norvegicus (Rat).